The chain runs to 119 residues: Large ribosomal subunit protein bL20 (119 aa).

It belongs to the bacterial ribosomal protein bL20 family.

Its function is as follows. Binds directly to 23S ribosomal RNA and is necessary for the in vitro assembly process of the 50S ribosomal subunit. It is not involved in the protein synthesizing functions of that subunit. The polypeptide is Large ribosomal subunit protein bL20 (Streptococcus pyogenes serotype M1).